The chain runs to 1095 residues: DNA-directed RNA polymerase subunit beta (1095 aa).

Positions 1069–1095 are disordered; the sequence is DLMQDVNPRRSTPSRPTYESLGKEYEE.

The protein belongs to the RNA polymerase beta chain family. In cyanobacteria the RNAP catalytic core is composed of 2 alpha, 1 beta, 1 beta', 1 gamma and 1 omega subunit. When a sigma factor is associated with the core the holoenzyme is formed, which can initiate transcription.

It carries out the reaction RNA(n) + a ribonucleoside 5'-triphosphate = RNA(n+1) + diphosphate. In terms of biological role, DNA-dependent RNA polymerase catalyzes the transcription of DNA into RNA using the four ribonucleoside triphosphates as substrates. The protein is DNA-directed RNA polymerase subunit beta of Prochlorococcus marinus (strain NATL2A).